A 93-amino-acid chain; its full sequence is Large ribosomal subunit protein bL27 (93 aa).

The propeptide occupies 1-10 (MRFLLGLQYF). Residues 14-36 (KGVGSTKNGRDSESKRLGAKKSD) are disordered. Residues 21–36 (NGRDSESKRLGAKKSD) show a composition bias toward basic and acidic residues.

It belongs to the bacterial ribosomal protein bL27 family. The N-terminus is cleaved by ribosomal processing cysteine protease Prp.

The chain is Large ribosomal subunit protein bL27 from Mycoplasma capricolum subsp. capricolum (strain California kid / ATCC 27343 / NCTC 10154).